Here is a 272-residue protein sequence, read N- to C-terminus: Serine/arginine-rich splicing factor 5 (272 aa).

The RRM 1 domain maps to 4–74 (CRVFIGRLNP…ERVTIEHARA (71 aa)). A disordered region spans residues 73–105 (RARSRGGRGRGRYSDRFSSRRPRNDRRNAPPVR). Residues 74–83 (ARSRGGRGRG) show a composition bias toward basic residues. Phosphoserine is present on Ser86. The RRM 2 domain maps to 108 to 181 (NRLIVENLSS…RKIKLIEGSK (74 aa)). Residue Lys167 is modified to N6-acetyllysine. A disordered region spans residues 174–272 (IKLIEGSKRH…SRSRSVDSGN (99 aa)). Positions 182–229 (RHSRSRSRSRSRTRSSSRSRSRSRSRSRKSYSRSRSRSRSRSRSKSRS) are enriched in basic residues. Ser227, Ser229, Ser233, Ser250, and Ser253 each carry phosphoserine. The segment covering 242-254 (RGSSSRSKSPASV) has biased composition (low complexity).

This sequence belongs to the splicing factor SR family. As to quaternary structure, interacts (via RS domain) with PHF5A (via N-terminus). Found in a pre-mRNA splicing complex with SRSF4/SFRS4, SRSF5/SFRS5, SNRNP70, SNRPA1, SRRM1 and SRRM2. In terms of processing, extensively phosphorylated on serine residues in the RS domain.

The protein localises to the nucleus. In terms of biological role, plays a role in constitutive splicing and can modulate the selection of alternative splice sites. The polypeptide is Serine/arginine-rich splicing factor 5 (SRSF5) (Homo sapiens (Human)).